A 265-amino-acid chain; its full sequence is Phosphate import ATP-binding protein PstB 1 (265 aa).

Positions 20–260 constitute an ABC transporter domain; the sequence is LSTNDLSVLY…PKGKITEDYI (241 aa). 53–60 is a binding site for ATP; the sequence is GASGSGKS.

The protein belongs to the ABC transporter superfamily. Phosphate importer (TC 3.A.1.7) family. In terms of assembly, the complex is composed of two ATP-binding proteins (PstB), two transmembrane proteins (PstC and PstA) and a solute-binding protein (PstS).

It localises to the cell membrane. It carries out the reaction phosphate(out) + ATP + H2O = ADP + 2 phosphate(in) + H(+). In terms of biological role, part of the ABC transporter complex PstSACB involved in phosphate import. Responsible for energy coupling to the transport system. In Lactobacillus acidophilus (strain ATCC 700396 / NCK56 / N2 / NCFM), this protein is Phosphate import ATP-binding protein PstB 1.